The primary structure comprises 290 residues: ATP synthase gamma chain (290 aa).

The protein belongs to the ATPase gamma chain family. In terms of assembly, F-type ATPases have 2 components, CF(1) - the catalytic core - and CF(0) - the membrane proton channel. CF(1) has five subunits: alpha(3), beta(3), gamma(1), delta(1), epsilon(1). CF(0) has three main subunits: a, b and c.

The protein localises to the cell inner membrane. Its function is as follows. Produces ATP from ADP in the presence of a proton gradient across the membrane. The gamma chain is believed to be important in regulating ATPase activity and the flow of protons through the CF(0) complex. The chain is ATP synthase gamma chain from Anaeromyxobacter sp. (strain Fw109-5).